The primary structure comprises 262 residues: Small ribosomal subunit protein eS4B (262 aa).

Positions 42–105 (LPLIVFLRNR…GEHFRLVYDI (64 aa)) constitute an S4 RNA-binding domain. The residue at position 223 (Ser223) is a Phosphoserine.

The protein belongs to the eukaryotic ribosomal protein eS4 family. Component of the small ribosomal subunit (SSU). Mature yeast ribosomes consist of a small (40S) and a large (60S) subunit. The 40S small subunit contains 1 molecule of ribosomal RNA (18S rRNA) and at least 33 different proteins. The large 60S subunit contains 3 rRNA molecules (25S, 5.8S and 5S rRNA) and at least 46 different proteins.

The protein localises to the cytoplasm. It is found in the nucleus. Its subcellular location is the nucleolus. In terms of biological role, component of the ribosome, a large ribonucleoprotein complex responsible for the synthesis of proteins in the cell. The small ribosomal subunit (SSU) binds messenger RNAs (mRNAs) and translates the encoded message by selecting cognate aminoacyl-transfer RNA (tRNA) molecules. The large subunit (LSU) contains the ribosomal catalytic site termed the peptidyl transferase center (PTC), which catalyzes the formation of peptide bonds, thereby polymerizing the amino acids delivered by tRNAs into a polypeptide chain. The nascent polypeptides leave the ribosome through a tunnel in the LSU and interact with protein factors that function in enzymatic processing, targeting, and the membrane insertion of nascent chains at the exit of the ribosomal tunnel. The protein is Small ribosomal subunit protein eS4B (rps402) of Schizosaccharomyces pombe (strain 972 / ATCC 24843) (Fission yeast).